Consider the following 147-residue polypeptide: Large ribosomal subunit protein uL13 (147 aa).

The interval 126–147 (AGPTHPHQAQQPVPYEIKQVAQ) is disordered.

The protein belongs to the universal ribosomal protein uL13 family. In terms of assembly, part of the 50S ribosomal subunit.

Functionally, this protein is one of the early assembly proteins of the 50S ribosomal subunit, although it is not seen to bind rRNA by itself. It is important during the early stages of 50S assembly. This Parafrankia sp. (strain EAN1pec) protein is Large ribosomal subunit protein uL13.